Here is a 401-residue protein sequence, read N- to C-terminus: MREAFICDGIRTPIGRYGGALSGVRADDLAAIPLRELLVRNPRLDAECIDDVILGCANQAGEDNRNVARMATLLAGLPQSVSGTTINRLCGSGLDALGFAARAIKAGDGDLLIAGGVESMSRAPFVMGKATSAFSRQAEMFDTTIGWRFVNPLMAQQFGTDSMPETAENVAELLKISREDQDSFALRSQQRTAKAQSSGILAEEIVPVVLKNKKGVVTEIQHDEHLRPETTLEQLRGLKAPFRANGVITAGNASGVNDGAAALIIASEQMAAAQGLTPRARIVAMATAGVEPRLMGLGPVPATRRVLERAGLSIHDMDVIELNEAFAAQALGVLRELGLPDDAPHVNPNGGAIALGHPLGMSGARLALAASHELHRRNGRYALCTMCIGVGQGIAMILERV.

The Acyl-thioester intermediate role is filled by Cys-90. Residues His-357 and Cys-387 each act as proton acceptor in the active site.

Belongs to the thiolase-like superfamily. Thiolase family.

The catalysed reaction is succinyl-CoA + acetyl-CoA = 3-oxoadipyl-CoA + CoA. The protein operates within aromatic compound metabolism; phenylacetate degradation. In terms of biological role, catalyzes thiolytic cleavage of beta-ketoadipyl-CoA to succinyl-CoA and acetyl-CoA. The polypeptide is Beta-ketoadipyl-CoA thiolase (paaJ) (Escherichia coli).